A 641-amino-acid polypeptide reads, in one-letter code: Phosphomethylpyrimidine synthase (641 aa).

Substrate is bound by residues Asn-221, Met-250, Tyr-279, His-315, 335–337 (SRG), 376–379 (DGLR), and Glu-415. Position 419 (His-419) interacts with Zn(2+). Tyr-442 is a binding site for substrate. His-483 contributes to the Zn(2+) binding site. The [4Fe-4S] cluster site is built by Cys-563, Cys-566, and Cys-571.

It belongs to the ThiC family. In terms of assembly, homodimer. [4Fe-4S] cluster is required as a cofactor.

It catalyses the reaction 5-amino-1-(5-phospho-beta-D-ribosyl)imidazole + S-adenosyl-L-methionine = 4-amino-2-methyl-5-(phosphooxymethyl)pyrimidine + CO + 5'-deoxyadenosine + formate + L-methionine + 3 H(+). The protein operates within cofactor biosynthesis; thiamine diphosphate biosynthesis. In terms of biological role, catalyzes the synthesis of the hydroxymethylpyrimidine phosphate (HMP-P) moiety of thiamine from aminoimidazole ribotide (AIR) in a radical S-adenosyl-L-methionine (SAM)-dependent reaction. This Rhodopseudomonas palustris (strain TIE-1) protein is Phosphomethylpyrimidine synthase.